Consider the following 369-residue polypeptide: Histidinol-phosphate aminotransferase (369 aa).

A disordered region spans residues 1–39 (MSFGIDDLPVRDELRGKSPYGAPQLDVPVRLNTNENPYP). Lysine 230 bears the N6-(pyridoxal phosphate)lysine mark.

This sequence belongs to the class-II pyridoxal-phosphate-dependent aminotransferase family. Histidinol-phosphate aminotransferase subfamily. In terms of assembly, homodimer. Pyridoxal 5'-phosphate is required as a cofactor.

The enzyme catalyses L-histidinol phosphate + 2-oxoglutarate = 3-(imidazol-4-yl)-2-oxopropyl phosphate + L-glutamate. It participates in amino-acid biosynthesis; L-histidine biosynthesis; L-histidine from 5-phospho-alpha-D-ribose 1-diphosphate: step 7/9. In Streptomyces avermitilis (strain ATCC 31267 / DSM 46492 / JCM 5070 / NBRC 14893 / NCIMB 12804 / NRRL 8165 / MA-4680), this protein is Histidinol-phosphate aminotransferase (hisC).